We begin with the raw amino-acid sequence, 344 residues long: tRNA dimethylallyltransferase (344 aa).

Residue 19–26 (GPTASGKT) coordinates ATP. 21-26 (TASGKT) provides a ligand contact to substrate.

The protein belongs to the IPP transferase family. In terms of assembly, monomer. Requires Mg(2+) as cofactor.

The enzyme catalyses adenosine(37) in tRNA + dimethylallyl diphosphate = N(6)-dimethylallyladenosine(37) in tRNA + diphosphate. Catalyzes the transfer of a dimethylallyl group onto the adenine at position 37 in tRNAs that read codons beginning with uridine, leading to the formation of N6-(dimethylallyl)adenosine (i(6)A). In Bifidobacterium animalis subsp. lactis (strain AD011), this protein is tRNA dimethylallyltransferase.